The primary structure comprises 883 residues: AP-5 complex subunit beta-1 (883 aa).

As to quaternary structure, probably part of the adaptor protein complex 5 (AP-5).

Its function is as follows. As part of AP-5, a probable fifth adaptor protein complex, it may be involved in endosomal transport. The protein is AP-5 complex subunit beta-1 (ap5b1) of Xenopus tropicalis (Western clawed frog).